A 339-amino-acid polypeptide reads, in one-letter code: Ketol-acid reductoisomerase (NADP(+)) (339 aa).

A KARI N-terminal Rossmann domain is found at 1-182 (MRVYYDRDAD…GGGRSGIIET (182 aa)). NADP(+)-binding positions include 24–27 (YGSQ), Lys48, Ser51, Thr53, and 83–86 (DELQ). His108 is an active-site residue. Gly134 serves as a coordination point for NADP(+). One can recognise a KARI C-terminal knotted domain in the interval 183–328 (NFKEECETDL…AKLRGMMPWI (146 aa)). Positions 191, 195, 227, and 231 each coordinate Mg(2+). Ser252 lines the substrate pocket.

The protein belongs to the ketol-acid reductoisomerase family. The cofactor is Mg(2+).

The enzyme catalyses (2R)-2,3-dihydroxy-3-methylbutanoate + NADP(+) = (2S)-2-acetolactate + NADPH + H(+). The catalysed reaction is (2R,3R)-2,3-dihydroxy-3-methylpentanoate + NADP(+) = (S)-2-ethyl-2-hydroxy-3-oxobutanoate + NADPH + H(+). It functions in the pathway amino-acid biosynthesis; L-isoleucine biosynthesis; L-isoleucine from 2-oxobutanoate: step 2/4. It participates in amino-acid biosynthesis; L-valine biosynthesis; L-valine from pyruvate: step 2/4. Functionally, involved in the biosynthesis of branched-chain amino acids (BCAA). Catalyzes an alkyl-migration followed by a ketol-acid reduction of (S)-2-acetolactate (S2AL) to yield (R)-2,3-dihydroxy-isovalerate. In the isomerase reaction, S2AL is rearranged via a Mg-dependent methyl migration to produce 3-hydroxy-3-methyl-2-ketobutyrate (HMKB). In the reductase reaction, this 2-ketoacid undergoes a metal-dependent reduction by NADPH to yield (R)-2,3-dihydroxy-isovalerate. The protein is Ketol-acid reductoisomerase (NADP(+)) of Sinorhizobium medicae (strain WSM419) (Ensifer medicae).